A 201-amino-acid polypeptide reads, in one-letter code: Ribosome maturation factor RimP (201 aa).

Belongs to the RimP family.

It localises to the cytoplasm. Required for maturation of 30S ribosomal subunits. The protein is Ribosome maturation factor RimP of Acidiphilium cryptum (strain JF-5).